Here is a 104-residue protein sequence, read N- to C-terminus: Protein MGF 300-3L (104 aa).

This sequence belongs to the asfivirus MGF 300 family.

In terms of biological role, plays a role in virus cell tropism, and may be required for efficient virus replication in macrophages. The protein is Protein MGF 300-3L of African swine fever virus (isolate Tick/Malawi/Lil 20-1/1983) (ASFV).